The chain runs to 2485 residues: MHVSLAEALEVRGGPLQEEEIWAVLNQSAESLQELFRKVSLADPAALGFIISPWSLLLLPSGSVSFTDENISNQDLRAFTAPEVLQNQSLTSLSDVEKIHIYSLGMTLYWGADYEVPQSQPIKLGDHLNSILLGMCEDVIYARVSVRTVLDACSAHIRNSNCAPSFSYVKHLVKLVLGNLSGTDQLSCNSEQKPDRSQAIRDRLRGKGLPTGRSSTSDVLDIQKPPLSHQTFLNKGLSKSMGFLSIKDTQDENYFKDILSDNSGREDSENTFSPYQFKTSGPEKKPIPGIDVLSKKKIWASSMDLLCTADRDFSSGETATYRRCHPEAVTVRTSTTPRKKEARYSDGSIALDIFGPQKMDPIYHTRELPTSSAISSALDRIRERQKKLQVLREAMNVEEPVRRYKTYHGDVFSTSSESPSIISSESDFRQVRRSEASKRFESSSGLPGVDETLSQGQSQRPSRQYETPFEGNLINQEIMLKRQEEELMQLQAKMALRQSRLSLYPGDTIKASMLDITRDPLREIALETAMTQRKLRNFFGPEFVKMTIEPFISLDLPRSILTKKGKNEDNRRKVNIMLLNGQRLELTCDTKTICKDVFDMVVAHIGLVEHHLFALATLKDNEYFFVDPDLKLTKVAPEGWKEEPKKKTKATVNFTLFFRIKFFMDDVSLIQHTLTCHQYYLQLRKDILEERMHCDDETSLLLASLALQAEYGDYQPEVHGVSYFRMEHYLPARVMEKLDLSYIKEELPKLHNTYVGASEKETELEFLKVCQRLTEYGVHFHRVHPEKKSQTGILLGVCSKGVLVFEVHNGVRTLVLRFPWRETKKISFSKKKITLQNTSDGIKHGFQTDNSKICQYLLHLCSYQHKFQLQMRARQSNQDAQDIERASFRSLNLQAESVRGFNMGRAISTGSLASSTLNKLAVRPLSVQAEILKRLSCSELSLYQPLQNSSKEKNDKASWEEKPREMSKSYHDLSQASLYPHRKNVIVNMEPPPQTVAELVGKPSHQMSRSDAESLAGVTKLNNSKSVASLNRSPERRKHESDSSSIEDPGQAYVLGMTMHSSGNSSSQVPLKENDVLHKRWSIVSSPEREITLVNLKKDAKYGLGFQIIGGEKMGRLDLGIFISSVAPGGPADLDGCLKPGDRLISVNSVSLEGVSHHAAIEILQNAPEDVTLVISQPKEKISKVPSTPVHLTNEMKNYMKKSSYMQDSAIDSSSKDHHWSRGTLRHISENSFGPSGGLREGSLSSQDSRTESASLSQSQVNGFFASHLGDQTWQESQHGSPSPSVISKATEKETFTDSNQSKTKKPGISDVTDYSDRGDSDMDEATYSSSQDHQTPKQESSSSVNTSNKMNFKTFSSSPPKPGDIFEVELAKNDNSLGISVTGGVNTSVRHGGIYVKAVIPQGAAESDGRIHKGDRVLAVNGVSLEGATHKQAVETLRNTGQVVHLLLEKGQSPTSKEHVPVTPQCTLSDQNAQGQGPEKVKKTTQVKDYSFVTEENTFEVKLFKNSSGLGFSFSREDNLIPEQINASIVRVKKLFPGQPAAESGKIDVGDVILKVNGASLKGLSQQEVISALRGTAPEVFLLLCRPPPGVLPEIDTALLTPLQSPAQVLPNSSKDSSQPSCVEQSTSSDENEMSDKSKKQCKSPSRRDSYSDSSGSGEDDLVTAPANISNSTWSSALHQTLSNMVSQAQSHHEAPKSQEDTICTMFYYPQKIPNKPEFEDSNPSPLPPDMAPGQSYQPQSESASSSSMDKYHIHHISEPTRQENWTPLKNDLENHLEDFELEVELLITLIKSEKGSLGFTVTKGNQRIGCYVHDVIQDPAKSDGRLKPGDRLIKVNDTDVTNMTHTDAVNLLRAASKTVRLVIGRVLELPRIPMLPHLLPDITLTCNKEELGFSLCGGHDSLYQVVYISDINPRSVAAIEGNLQLLDVIHYVNGVSTQGMTLEEVNRALDMSLPSLVLKATRNDLPVVPSSKRSAVSAPKSTKGNGSYSVGSCSQPALTPNDSFSTVAGEEINEISYPKGKCSTYQIKGSPNLTLPKESYIQEDDIYDDSQEAEVIQSLLDVVDEEAQNLLNENNAAGYSCGPGTLKMNGKLSEERTEDTDCDGSPLPEYFTEATKMNGCEEYCEEKVKSESLIQKPQEKKTDDDEITWGNDELPIERTNHEDSDKDHSFLTNDELAVLPVVKVLPSGKYTGANLKSVIRVLRGLLDQGIPSKELENLQELKPLDQCLIGQTKENRRKNRYKNILPYDATRVPLGDEGGYINASFIKIPVGKEEFVYIACQGPLPTTVGDFWQMIWEQKSTVIAMMTQEVEGEKIKCQRYWPNILGKTTMVSNRLRLALVRMQQLKGFVVRAMTLEDIQTREVRHISHLNFTAWPDHDTPSQPDDLLTFISYMRHIHRSGPIITHCSAGIGRSGTLICIDVVLGLISQDLDFDISDLVRCMRLQRHGMVQTEDQYIFCYQVILYVLTRLQAEEEQKQQPQLLK.

In terms of domain architecture, KIND spans 3 to 190 (VSLAEALEVR…SGTDQLSCNS (188 aa)). Residues 186–220 (LSCNSEQKPDRSQAIRDRLRGKGLPTGRSSTSDVL) form a disordered region. Basic and acidic residues predominate over residues 192-205 (QKPDRSQAIRDRLR). At Ser240 the chain carries Phosphoserine. Positions 260–283 (SDNSGREDSENTFSPYQFKTSGPE) are disordered. A compositionally biased stretch (polar residues) spans 270 to 279 (NTFSPYQFKT). Phosphoserine occurs at positions 301 and 302. Residues 433 to 467 (RSEASKRFESSSGLPGVDETLSQGQSQRPSRQYET) form a disordered region. A compositionally biased stretch (polar residues) spans 452–465 (TLSQGQSQRPSRQY). A coiled-coil region spans residues 469–504 (FEGNLINQEIMLKRQEEELMQLQAKMALRQSRLSLY). An FERM domain is found at 572–872 (RKVNIMLLNG…YQHKFQLQMR (301 aa)). Phosphoserine is present on residues Ser890, Ser897, Ser908, Ser911, and Ser914. 2 disordered regions span residues 947–975 (QNSS…DLSQ) and 995–1049 (TVAE…IEDP). Residues 950 to 971 (SKEKNDKASWEEKPREMSKSYH) show a composition bias toward basic and acidic residues. Polar residues predominate over residues 1020–1032 (KLNNSKSVASLNR). Ser1029, Ser1033, and Ser1085 each carry phosphoserine. A compositionally biased stretch (basic and acidic residues) spans 1033–1042 (SPERRKHESD). Residues 1093–1178 (LVNLKKDAKY…EDVTLVISQP (86 aa)) enclose the PDZ 1 domain. 2 disordered regions span residues 1227–1258 (HISE…SLSQ) and 1273–1362 (TWQE…SPPK). Composition is skewed to polar residues over residues 1243-1258 (SLSS…SLSQ), 1273-1288 (TWQE…SVIS), and 1327-1359 (TYSS…FSSS). 2 PDZ domains span residues 1368–1452 (EVEL…LEKG) and 1501–1588 (EVKL…LCRP). The span at 1608 to 1630 (AQVLPNSSKDSSQPSCVEQSTSS) shows a compositional bias: polar residues. Disordered stretches follow at residues 1608-1665 (AQVL…DLVT) and 1715-1751 (PNKP…SSMD). Over residues 1736 to 1749 (QSYQPQSESASSSS) the composition is skewed to low complexity. PDZ domains lie at 1788 to 1868 (LITL…IGRV) and 1882 to 1965 (PDIT…ATRN). Positions 1971–1996 (PSSKRSAVSAPKSTKGNGSYSVGSCS) are disordered. Positions 1973–1996 (SKRSAVSAPKSTKGNGSYSVGSCS) are enriched in polar residues. The Tyrosine-protein phosphatase domain maps to 2213-2467 (PSKELENLQE…IFCYQVILYV (255 aa)). Substrate contacts are provided by residues Asp2378, 2408-2414 (CSAGIGR), and Gln2452. Catalysis depends on Cys2408, which acts as the Phosphocysteine intermediate. The segment at 2408 to 2414 (CSAGIGR) is substrate.

Belongs to the protein-tyrosine phosphatase family. Non-receptor class subfamily. In terms of assembly, interacts (via the first PDZ domain) with PLEKHA1 and PLEKHA2. Interacts (via the second PDZ domain) with TNFRSF6 (Fas receptor) (via C-terminus). Interacts (via the second PDZ domain) with TRIP6 (via the third LIM domain and C-terminus). Interacts (via the third PDZ domain) with NGFR (via C-terminal SVP motif) and PKN2 (via C-terminus). Interacts (via the second or fourth PDZ domains) with PDLIM4 (via C-terminus only or via combined C-terminus and LIM domain, but not LIM domain only). Found in a complex with PDLIM4 and TRIP6. Interacts with PDLIM4; this interaction results in dephosphorylation of SRC 'Tyr-419' by this protein leading to its inactivation. Interacts with BRD7. Interacts with RAPGEF6. Interacts with ARHGAP29. Interacts with PIK3R2; dephosphorylates PIK3R2. Interacts with FBXL2. Interacts (via the FERM domain) with ENTR1. Found in a complex with ENTR1, PTPN13 and GIT1. Expressed in keratinocytes (at protein level). Present in most tissues with the exception of the liver and skeletal muscle. Most abundant in lung, kidney and fetal brain.

The protein localises to the cytoplasm. Its subcellular location is the cytoskeleton. It is found in the nucleus. The protein resides in the cell projection. It localises to the lamellipodium. It carries out the reaction O-phospho-L-tyrosyl-[protein] + H2O = L-tyrosyl-[protein] + phosphate. Its function is as follows. Tyrosine phosphatase which negatively regulates FAS-induced apoptosis and NGFR-mediated pro-apoptotic signaling. May regulate phosphoinositide 3-kinase (PI3K) signaling through dephosphorylation of PIK3R2. The protein is Tyrosine-protein phosphatase non-receptor type 13 (PTPN13) of Homo sapiens (Human).